A 615-amino-acid chain; its full sequence is MPKLRSATTTQGRNMAGARALWRATGMKDGDFGKPIIAVSNSFTQFVPGHVHLKDMGQLVARSIEAAGGVAKEFNTIAVDDGIAMGHSGMLYSLPSREIIADSVEYMVNAHCADAIVCISNCDKITPGMLMASMRLNIPVIFVSGGPMEAGKTKLSDQIIKLDLVDAMVAGVDNNVNDEQSGEIERSACPTCGSCSGMFTANSMNCLTEALGLSLPGNGSMLATHADREGLFKQAGTQIVELCRRYYQQDDESVLPRNIANFKAFENAMSLDIAMGGSTNTILHLLAAAVEGEVPFTLDDIDRLSRNVPHLCKVAPSTPQYHMEDVHRAGGVLGILAELNRAGLLHEDTPHVLGKSIGEVISEWDITQPENAHALEFFRAGPAGIRTTKAFSQDCRYPTADTDRENGCIRSRANAFSEEGGLAVLFGNIAQDGCIVKTAGVDESIHVFTGRARIYESQDDAVKAILADEVIAGDIVVIRYEGPKGGPGMQEMLYPTTYLKAKGLGKKCALITDGRFSGGTSGLSIGHCSPEAASGGGIGLVEEGDSMTIDIPQRKIGVDISDEVLQARREKMEQSANPWKPVSRERKVSLALKAYALLATSADKGAVRDASKLED.

Residue aspartate 81 coordinates Mg(2+). Position 122 (cysteine 122) interacts with [2Fe-2S] cluster. Mg(2+) contacts are provided by aspartate 123 and lysine 124. At lysine 124 the chain carries N6-carboxylysine. A [2Fe-2S] cluster-binding site is contributed by cysteine 195. A Mg(2+)-binding site is contributed by glutamate 491. Residue serine 517 is the Proton acceptor of the active site.

The protein belongs to the IlvD/Edd family. As to quaternary structure, homodimer. The cofactor is [2Fe-2S] cluster. It depends on Mg(2+) as a cofactor.

The catalysed reaction is (2R)-2,3-dihydroxy-3-methylbutanoate = 3-methyl-2-oxobutanoate + H2O. It carries out the reaction (2R,3R)-2,3-dihydroxy-3-methylpentanoate = (S)-3-methyl-2-oxopentanoate + H2O. Its pathway is amino-acid biosynthesis; L-isoleucine biosynthesis; L-isoleucine from 2-oxobutanoate: step 3/4. The protein operates within amino-acid biosynthesis; L-valine biosynthesis; L-valine from pyruvate: step 3/4. In terms of biological role, functions in the biosynthesis of branched-chain amino acids. Catalyzes the dehydration of (2R,3R)-2,3-dihydroxy-3-methylpentanoate (2,3-dihydroxy-3-methylvalerate) into 2-oxo-3-methylpentanoate (2-oxo-3-methylvalerate) and of (2R)-2,3-dihydroxy-3-methylbutanoate (2,3-dihydroxyisovalerate) into 2-oxo-3-methylbutanoate (2-oxoisovalerate), the penultimate precursor to L-isoleucine and L-valine, respectively. This chain is Dihydroxy-acid dehydratase, found in Pseudoalteromonas atlantica (strain T6c / ATCC BAA-1087).